Consider the following 256-residue polypeptide: ATP-dependent dethiobiotin synthetase BioD (256 aa).

13-18 (EVGKTY) provides a ligand contact to ATP. A Mg(2+)-binding site is contributed by Thr17. Lys38 is a catalytic residue. Ser42 lines the substrate pocket. Residues Asp56, 118-121 (EGAG), and 187-188 (NR) each bind ATP. 2 residues coordinate Mg(2+): Asp56 and Glu118.

This sequence belongs to the dethiobiotin synthetase family. Homodimer. Mg(2+) serves as cofactor.

It localises to the cytoplasm. It catalyses the reaction (7R,8S)-7,8-diammoniononanoate + CO2 + ATP = (4R,5S)-dethiobiotin + ADP + phosphate + 3 H(+). It functions in the pathway cofactor biosynthesis; biotin biosynthesis; biotin from 7,8-diaminononanoate: step 1/2. In terms of biological role, catalyzes a mechanistically unusual reaction, the ATP-dependent insertion of CO2 between the N7 and N8 nitrogen atoms of 7,8-diaminopelargonic acid (DAPA, also called 7,8-diammoniononanoate) to form a ureido ring. The chain is ATP-dependent dethiobiotin synthetase BioD from Rhodopirellula baltica (strain DSM 10527 / NCIMB 13988 / SH1).